Here is a 178-residue protein sequence, read N- to C-terminus: MSMQEAKKENVMRRVVLDKVTVNIGVGESGERLQKAYQLVQELTGVKPVYTKGRKSIREFGVRKGAPIGVKATLRRQAAVEFLKKVLPAVNFRLKQSSFDNYGNVSFGIAEHVLIPGTRYDPEIGIFGMDVAITLVRPGYRTMKRKRKKASIPRRHRVTKEEAINFMKENFNVTILEG.

The protein belongs to the universal ribosomal protein uL5 family. Part of the 50S ribosomal subunit; contacts the 5S rRNA and probably tRNA. Forms a bridge to the 30S subunit in the 70S ribosome.

Its function is as follows. This is one of the proteins that bind and probably mediate the attachment of the 5S RNA into the large ribosomal subunit, where it forms part of the central protuberance. In the 70S ribosome it contacts protein S13 of the 30S subunit (bridge B1b), connecting the 2 subunits; this bridge is implicated in subunit movement. May contact the P site tRNA; the 5S rRNA and some of its associated proteins might help stabilize positioning of ribosome-bound tRNAs. The chain is Large ribosomal subunit protein uL5 from Sulfolobus acidocaldarius (strain ATCC 33909 / DSM 639 / JCM 8929 / NBRC 15157 / NCIMB 11770).